The primary structure comprises 657 residues: Translation factor GUF1, mitochondrial (657 aa).

A mitochondrion-targeting transit peptide spans 1–21; sequence MLKTLGLRSLCPSLGGRGFRR. The region spanning 56 to 240 is the tr-type G domain; it reads ENYRNFSIVA…TIVDRIPPPT (185 aa). Residues 65-72, 132-136, and 186-189 contribute to the GTP site; these read AHVDHGKS, DTPGH, and NKID.

Belongs to the TRAFAC class translation factor GTPase superfamily. Classic translation factor GTPase family. LepA subfamily.

It localises to the mitochondrion inner membrane. The catalysed reaction is GTP + H2O = GDP + phosphate + H(+). In terms of biological role, promotes mitochondrial protein synthesis. May act as a fidelity factor of the translation reaction, by catalyzing a one-codon backward translocation of tRNAs on improperly translocated ribosomes. Binds to mitochondrial ribosomes in a GTP-dependent manner. This chain is Translation factor GUF1, mitochondrial, found in Candida glabrata (strain ATCC 2001 / BCRC 20586 / JCM 3761 / NBRC 0622 / NRRL Y-65 / CBS 138) (Yeast).